Reading from the N-terminus, the 433-residue chain is O-methyltransferase aclM (433 aa).

The stretch at 5 to 37 (LTDAERTALQTSLEALNRQVEATRNILRSNSQK) forms a coiled coil. S-adenosyl-L-methionine-binding positions include Asp277 and 311–313 (GDF). The Proton acceptor role is filled by His330.

It belongs to the class I-like SAM-binding methyltransferase superfamily. Cation-independent O-methyltransferase family. COMT subfamily.

It participates in mycotoxin biosynthesis. O-methyltransferase; part of the gene cluster that mediates the biosynthesis of aspirochlorine (or antibiotic A30641), an unusual halogenated spiro compound with distinctive antifungal properties due to selective inhibition of protein biosynthesis, and which is also active against bacteria, viruses, and murine tumor cells. The non-ribosomal peptide synthetase (NRPS) aclP is responsible the formation of the diketopiperazine (DKP) core from the condensation of 2 phenylalanine residues. One Phe residue is tailored into chlorotyrosine by hydroxylation and chlorination, whereas the second Phe undergoes an unprecedented C-C bond cleavage to be converted into glycine. After formation of the DKP, sulfur is incorporated into the DKP by conjugation with glutathione by aclG, followed by its stepwise degradation to the thiol by aclI, aclJ and aclK, and the dithiol oxidation by aclT. In addition, oxygenases (aclB, aclC, aclL and aclO) and O-methyltransferases (aclM and aclU) act as tailoring enzymes to produce the intermediate dechloroaspirochlorine. Ultimately, chlorination of dechloroaspirochlorine by the halogenase aclH is the last step in the aspirochlorine pathway. This chain is O-methyltransferase aclM, found in Aspergillus oryzae (strain ATCC 42149 / RIB 40) (Yellow koji mold).